The following is a 605-amino-acid chain: DNA mismatch repair protein MutL (605 aa).

Belongs to the DNA mismatch repair MutL/HexB family.

Functionally, this protein is involved in the repair of mismatches in DNA. It is required for dam-dependent methyl-directed DNA mismatch repair. May act as a 'molecular matchmaker', a protein that promotes the formation of a stable complex between two or more DNA-binding proteins in an ATP-dependent manner without itself being part of a final effector complex. This chain is DNA mismatch repair protein MutL, found in Sinorhizobium medicae (strain WSM419) (Ensifer medicae).